Here is a 294-residue protein sequence, read N- to C-terminus: NAD kinase (294 aa).

Asp-74 acts as the Proton acceptor in catalysis. NAD(+) is bound by residues 74–75 (DG), 148–149 (NE), His-159, Arg-176, Asp-178, 189–194 (TAYSLS), and Gln-249.

It belongs to the NAD kinase family. A divalent metal cation is required as a cofactor.

Its subcellular location is the cytoplasm. It carries out the reaction NAD(+) + ATP = ADP + NADP(+) + H(+). Involved in the regulation of the intracellular balance of NAD and NADP, and is a key enzyme in the biosynthesis of NADP. Catalyzes specifically the phosphorylation on 2'-hydroxyl of the adenosine moiety of NAD to yield NADP. In Vibrio vulnificus (strain YJ016), this protein is NAD kinase.